Consider the following 464-residue polypeptide: Uronate isomerase (464 aa).

The protein belongs to the metallo-dependent hydrolases superfamily. Uronate isomerase family.

It carries out the reaction D-glucuronate = D-fructuronate. It catalyses the reaction aldehydo-D-galacturonate = keto-D-tagaturonate. Its pathway is carbohydrate metabolism; pentose and glucuronate interconversion. This is Uronate isomerase from Caldicellulosiruptor saccharolyticus (strain ATCC 43494 / DSM 8903 / Tp8T 6331).